An 827-amino-acid chain; its full sequence is Copper-transporting ATPase 2 (827 aa).

2 consecutive HMA domains span residues 15-80 and 82-148; these read VSTN…YAPR and ATEE…YELR. Cu cation contacts are provided by Cys-26, Cys-29, Cys-93, and Cys-96. 6 consecutive transmembrane segments (helical) span residues 174–194, 210–230, 246–266, 271–291, 430–450, and 458–478; these read VTISVLMTLPLFLMEMGSHFI, NLYLQFALATLVLFGPGLRFF, SLVVLGTTAAWGYSVVATFVP, SGTANVYYEAAAVIVTLVLLG, GWFVPAVILAAVLTFAAWYTF, and FALVNAVAVLIIACPCAMGLA. Asp-515 serves as the catalytic 4-aspartylphosphate intermediate. Mg(2+) is bound by residues Asp-714 and Asp-718. 2 helical membrane passes run 771-793 and 797-819; these read NLFWAFAYNVSLIPVAAGVLYPV and LLSPIFAAAAMAMSSVFVLGNAL.

It belongs to the cation transport ATPase (P-type) (TC 3.A.3) family. Type IB subfamily.

The protein localises to the cell membrane. The enzyme catalyses Cu(2+)(in) + ATP + H2O = Cu(2+)(out) + ADP + phosphate + H(+). Its function is as follows. Involved in copper transport. The sequence is that of Copper-transporting ATPase 2 (actP2) from Rhizobium meliloti (strain 1021) (Ensifer meliloti).